A 336-amino-acid chain; its full sequence is Ultraviolet-sensitive opsin (336 aa).

The Extracellular segment spans residues 1 to 29; sequence MDAWTYQFGNLSKISPFEGPQYHLAPKWA. N-linked (GlcNAc...) asparagine glycosylation is present at Asn-10. Residues 30–54 form a helical membrane-spanning segment; sequence FYLQAAFMGFVFFVGTPLNAIVLFV. At 55–66 the chain is on the cytoplasmic side; that stretch reads TMKYKKLRQPLN. Residues 67 to 91 traverse the membrane as a helical segment; sequence YILVNISLGGFIFDTFSVSQVFFSA. The Extracellular portion of the chain corresponds to 92–106; the sequence is LRGYYFFGYTLCAME. An intrachain disulfide couples Cys-103 to Cys-180. A helical membrane pass occupies residues 107–126; sequence AAMGSIAGLVTGWSLAVLAF. The Cytoplasmic segment spans residues 127 to 145; the sequence is ERYVVICKPFGSFKFGQSQ. A helical membrane pass occupies residues 146–169; the sequence is ALGAVALTWIIGIGCATPPFWGWS. Residues 170–195 lie on the Extracellular side of the membrane; sequence RYIPEGIGTACGPDWYTKNEEYNTES. A helical transmembrane segment spans residues 196 to 223; it reads YTYFLLVSCFMMPIMIITFSYSQLLGAL. Residues 224–245 are Cytoplasmic-facing; the sequence is RAVAAQQAESASTQKAEKEVSR. A helical transmembrane segment spans residues 246 to 269; sequence MVVVMVGSFVVCYGPYAITALYFS. Over 270–277 the chain is Extracellular; it reads YAEDSNKD. The chain crosses the membrane as a helical span at residues 278-302; the sequence is YRLVAIPSLFSKSSCVYNPLIYAFM. Lys-289 bears the N6-(retinylidene)lysine mark. At 303 to 336 the chain is on the cytoplasmic side; sequence NKQFNACIMETVFGKKIDESSEVSSKTETSSVSA.

This sequence belongs to the G-protein coupled receptor 1 family. Opsin subfamily. Phosphorylated on some or all of the serine and threonine residues present in the C-terminal region.

It is found in the membrane. Its function is as follows. Visual pigments are the light-absorbing molecules that mediate vision. They consist of an apoprotein, opsin, covalently linked to cis-retinal. In Carassius auratus (Goldfish), this protein is Ultraviolet-sensitive opsin.